The sequence spans 164 residues: R-phycoerythrin alpha chain (164 aa).

The (2R,3E)-phycoerythrobilin site is built by Asn-47, Lys-81, Cys-82, Arg-84, His-88, Arg-137, Cys-139, and Arg-142.

This sequence belongs to the phycobiliprotein family. Heterododecamer of 6 alpha and 6 beta chains. The basic functional unit of phycobiliproteins is a ring-shaped hexamer formed from two back-to-back trimers contacting via the alpha chain subunits. The trimers are composed of alpha/beta subunit heterodimers arranged around a three-fold axis of symmetry. The phycoerythrins also contain a gamma subunit which is located in the center of the hexamer. In terms of processing, contains two covalently linked phycoerythrobilin chromophores.

It is found in the plastid. The protein localises to the chloroplast thylakoid membrane. In terms of biological role, light-harvesting photosynthetic tetrapyrrole chromophore-protein from the phycobiliprotein complex. This Griffithsia monilis (Red alga) protein is R-phycoerythrin alpha chain (cpeA).